The sequence spans 219 residues: Cytidylate kinase (219 aa).

G15–T23 is a binding site for ATP.

This sequence belongs to the cytidylate kinase family. Type 1 subfamily.

The protein localises to the cytoplasm. It carries out the reaction CMP + ATP = CDP + ADP. The enzyme catalyses dCMP + ATP = dCDP + ADP. This is Cytidylate kinase from Brucella melitensis biotype 1 (strain ATCC 23456 / CCUG 17765 / NCTC 10094 / 16M).